A 632-amino-acid polypeptide reads, in one-letter code: Basic helix-loop-helix ARNT-like protein 1 (632 aa).

Residues 1 to 39 form a disordered region; sequence MADQRMDISSTISDFMSPGPTDLLSGSLGTSGVDCNRKR. S17 is modified (phosphoserine; by GSK3-beta). T21 carries the phosphothreonine; by GSK3-beta modification. The Nuclear localization signal signature appears at 36-41; it reads NRKRKG. The bHLH domain maps to 79–132; that stretch reads NAREAHSQIEKRRRDKMNSFIDELASLVPTCNAMSRKLDKLTVLRMAVQHMKTL. The residue at position 85 (S85) is a Phosphoserine. A Phosphoserine; by CK2 modification is found at S97. Positions 149–159 match the Nuclear export signal 1 motif; the sequence is LSDDELKHLIL. The PAS 1 domain maps to 150–222; it reads SDDELKHLIL…EQLSSSDTAP (73 aa). A Glycyl lysine isopeptide (Lys-Gly) (interchain with G-Cter in SUMO2 and SUMO3) cross-link involves residue K259. K266 is covalently cross-linked (Glycyl lysine isopeptide (Lys-Gly) (interchain with G-Cter in SUMO); alternate). Residue K266 forms a Glycyl lysine isopeptide (Lys-Gly) (interchain with G-Cter in SUMO2); alternate linkage. Positions 333–403 constitute a PAS 2 domain; it reads QPANGEIRVK…CHRQVLQTRE (71 aa). The Nuclear export signal 2 motif lies at 367-375; sequence LAYLPQELL. One can recognise a PAC domain in the interval 408–451; that stretch reads NCYKFKIKDGSFITLRSRWFSFMNPWTKEVEYIVSTNTVVLANV. Disordered stretches follow at residues 465 to 498 and 517 to 601; these read PPHS…RAGA and GSSP…SPSN. An interaction with CIART region spans residues 514 to 594; that stretch reads RIRGSSPSSC…IGIDMIDNDQ (81 aa). Over residues 517 to 527 the composition is skewed to low complexity; sequence GSSPSSCGSSP. Position 544 is an N6-acetyllysine (K544).

Component of the circadian clock oscillator which includes the CRY1/2 proteins, CLOCK or NPAS2, BMAL1 or BMAL2, CSNK1D and/or CSNK1E, TIMELESS and the PER1/2/3 proteins. Forms a heterodimer with CLOCK. The CLOCK-BMAL1 heterodimer is required for E-box-dependent transactivation, for CLOCK nuclear translocation and degradation, and, for phosphorylation of both CLOCK and BMAL1. Part of a nuclear complex which also includes RACK1 and PRKCA; RACK1 and PRKCA are recruited to the complex in a circadian manner. Interacts with NPAS2. Interacts with EZH2. Interacts with SUMO3. Interacts with SIRT1. Interacts with AHR. Interacts with ID1, ID2 and ID3. Interacts with DDX4. Interacts with OGT. Interacts with EED and SUZ12. Interacts with MTA1. Interacts with CIART. Interacts with HSP90. Interacts with KAT2B and EP300. Interacts with BHLHE40/DEC1 and BHLHE41/DEC2. Interacts with RELB and the interaction is enhanced in the presence of CLOCK. Interacts with PER1, PER2, CRY1 and CRY2 and this interaction requires a translocation to the nucleus. Interaction of the CLOCK-BMAL1 heterodimer with PER or CRY inhibits transcription activation. Interaction of the CLOCK-BMAL1 with CRY1 is independent of DNA but with PER2 is off DNA. The CLOCK-BMAL1 heterodimer interacts with GSK3B. Interacts with KDM5A. Interacts with KMT2A; in a circadian manner. Interacts with UBE3A. Interacts with PRKCG. Interacts with MAGEL2. Interacts with NCOA2. Interacts with THRAP3. The CLOCK-BMAL1 heterodimer interacts with PASD1. Interacts with PASD1. Interacts with USP9X. Interacts with PIWIL2 (via PIWI domain). Interacts with HDAC3. Interacts with HNF4A. In terms of processing, ubiquitinated, leading to its proteasomal degradation. Deubiquitinated by USP9X. Post-translationally, O-glycosylated; contains O-GlcNAc. O-glycosylation by OGT prevents protein degradation by inhibiting ubiquitination. It also stabilizes the CLOCK-BMAL1 heterodimer thereby increasing CLOCK-BMAL1-mediated transcription of genes in the negative loop of the circadian clock such as PER1/2/3 and CRY1/2. Acetylated on Lys-544 by CLOCK during the repression phase of the circadian cycle. Acetylation facilitates recruitment of CRY1 protein and initiates the repression phase of the circadian cycle. Acetylated at Lys-544 by KAT5 during the activation phase of the cycle, leading to recruitment of the positive transcription elongation factor b (P-TEFb) and BRD4, followed by productive elongation of circadian transcripts. Deacetylated by SIRT1, which may result in decreased protein stability. In terms of processing, phosphorylated upon dimerization with CLOCK. Phosphorylation enhances the transcriptional activity, alters the subcellular localization and decreases the stability of the CLOCK-BMAL1 heterodimer by promoting its degradation. Phosphorylation shows circadian variations in the liver with a peak between CT10 to CT14. Phosphorylation at Ser-97 by CK2 is essential for its nuclear localization, its interaction with CLOCK and controls CLOCK nuclear entry. Dephosphorylation at Ser-85 is important for dimerization with CLOCK and transcriptional activity. Post-translationally, sumoylated on Lys-266 upon dimerization with CLOCK. Predominantly conjugated to poly-SUMO2/3 rather than SUMO1 and the level of these conjugates undergo rhythmic variation, peaking at CT9-CT12. Sumoylation localizes it exclusively to the PML body and promotes its ubiquitination in the PML body, ubiquitin-dependent proteasomal degradation and the transcriptional activity of the CLOCK-BMAL1 heterodimer. Undergoes lysosome-mediated degradation in a time-dependent manner in the liver. As to expression, expressed in liver and testis (at protein level). Expressed in the suprachiasmatic nucleus (SCN) in a circadian manner.

The protein resides in the nucleus. The protein localises to the cytoplasm. Its subcellular location is the PML body. With respect to regulation, the redox state of the cell can modulate the transcriptional activity of the CLOCK-BMAL1 and NPAS2-BMAL1 heterodimers; NADH and NADPH enhance the DNA-binding activity of the heterodimers. In terms of biological role, transcriptional activator which forms a core component of the circadian clock. The circadian clock, an internal time-keeping system, regulates various physiological processes through the generation of approximately 24 hour circadian rhythms in gene expression, which are translated into rhythms in metabolism and behavior. It is derived from the Latin roots 'circa' (about) and 'diem' (day) and acts as an important regulator of a wide array of physiological functions including metabolism, sleep, body temperature, blood pressure, endocrine, immune, cardiovascular, and renal function. Consists of two major components: the central clock, residing in the suprachiasmatic nucleus (SCN) of the brain, and the peripheral clocks that are present in nearly every tissue and organ system. Both the central and peripheral clocks can be reset by environmental cues, also known as Zeitgebers (German for 'timegivers'). The predominant Zeitgeber for the central clock is light, which is sensed by retina and signals directly to the SCN. The central clock entrains the peripheral clocks through neuronal and hormonal signals, body temperature and feeding-related cues, aligning all clocks with the external light/dark cycle. Circadian rhythms allow an organism to achieve temporal homeostasis with its environment at the molecular level by regulating gene expression to create a peak of protein expression once every 24 hours to control when a particular physiological process is most active with respect to the solar day. Transcription and translation of core clock components (CLOCK, NPAS2, BMAL1, BMAL2, PER1, PER2, PER3, CRY1 and CRY2) plays a critical role in rhythm generation, whereas delays imposed by post-translational modifications (PTMs) are important for determining the period (tau) of the rhythms (tau refers to the period of a rhythm and is the length, in time, of one complete cycle). A diurnal rhythm is synchronized with the day/night cycle, while the ultradian and infradian rhythms have a period shorter and longer than 24 hours, respectively. Disruptions in the circadian rhythms contribute to the pathology of cardiovascular diseases, cancer, metabolic syndromes and aging. A transcription/translation feedback loop (TTFL) forms the core of the molecular circadian clock mechanism. Transcription factors, CLOCK or NPAS2 and BMAL1 or BMAL2, form the positive limb of the feedback loop, act in the form of a heterodimer and activate the transcription of core clock genes and clock-controlled genes (involved in key metabolic processes), harboring E-box elements (5'-CACGTG-3') within their promoters. The core clock genes: PER1/2/3 and CRY1/2 which are transcriptional repressors form the negative limb of the feedback loop and interact with the CLOCK|NPAS2-BMAL1|BMAL2 heterodimer inhibiting its activity and thereby negatively regulating their own expression. This heterodimer also activates nuclear receptors NR1D1/2 and RORA/B/G, which form a second feedback loop and which activate and repress BMAL1 transcription, respectively. BMAL1 positively regulates myogenesis and negatively regulates adipogenesis via the transcriptional control of the genes of the canonical Wnt signaling pathway. Plays a role in normal pancreatic beta-cell function; regulates glucose-stimulated insulin secretion via the regulation of antioxidant genes NFE2L2/NRF2 and its targets SESN2, PRDX3, CCLC and CCLM. Negatively regulates the mTORC1 signaling pathway; regulates the expression of MTOR and DEPTOR. Controls diurnal oscillations of Ly6C inflammatory monocytes; rhythmic recruitment of the PRC2 complex imparts diurnal variation to chemokine expression that is necessary to sustain Ly6C monocyte rhythms. Regulates the expression of HSD3B2, STAR, PTGS2, CYP11A1, CYP19A1 and LHCGR in the ovary and also the genes involved in hair growth. Plays an important role in adult hippocampal neurogenesis by regulating the timely entry of neural stem/progenitor cells (NSPCs) into the cell cycle and the number of cell divisions that take place prior to cell-cycle exit. Regulates the circadian expression of CIART and KLF11. The CLOCK-BMAL1 heterodimer regulates the circadian expression of SERPINE1/PAI1, VWF, B3, CCRN4L/NOC, NAMPT, DBP, MYOD1, PPARGC1A, PPARGC1B, SIRT1, GYS2, F7, NGFR, GNRHR, BHLHE40/DEC1, ATF4, MTA1, KLF10 and also genes implicated in glucose and lipid metabolism. Promotes rhythmic chromatin opening, regulating the DNA accessibility of other transcription factors. May play a role in spermatogenesis; contributes to the chromatoid body assembly and physiology. The NPAS2-BMAL1 heterodimer positively regulates the expression of MAOA, F7 and LDHA and modulates the circadian rhythm of daytime contrast sensitivity by regulating the rhythmic expression of adenylate cyclase type 1 (ADCY1) in the retina. The preferred binding motif for the CLOCK-BMAL1 heterodimer is 5'-CACGTGA-3', which contains a flanking adenine nucleotide at the 3-prime end of the canonical 6-nucleotide E-box sequence. CLOCK specifically binds to the half-site 5'-CAC-3', while BMAL1 binds to the half-site 5'-GTGA-3'. The CLOCK-BMAL1 heterodimer also recognizes the non-canonical E-box motifs 5'-AACGTGA-3' and 5'-CATGTGA-3'. Essential for the rhythmic interaction of CLOCK with ASS1 and plays a critical role in positively regulating CLOCK-mediated acetylation of ASS1. Plays a role in protecting against lethal sepsis by limiting the expression of immune checkpoint protein CD274 in macrophages in a PKM2-dependent manner. Regulates the diurnal rhythms of skeletal muscle metabolism via transcriptional activation of genes promoting triglyceride synthesis (DGAT2) and metabolic efficiency (COQ10B). The polypeptide is Basic helix-loop-helix ARNT-like protein 1 (Bmal1) (Mus musculus (Mouse)).